The sequence spans 565 residues: Urocanate hydratase (565 aa).

Residues 58–59, Gln-136, 182–184, Glu-202, Arg-207, 245–246, 266–270, 276–277, and Tyr-325 each bind NAD(+); these read GG, GMG, NA, QTSAH, and YL. The active site involves Cys-413. NAD(+) is bound at residue Gly-495.

It belongs to the urocanase family. Requires NAD(+) as cofactor.

The protein resides in the cytoplasm. The catalysed reaction is 4-imidazolone-5-propanoate = trans-urocanate + H2O. It participates in amino-acid degradation; L-histidine degradation into L-glutamate; N-formimidoyl-L-glutamate from L-histidine: step 2/3. Catalyzes the conversion of urocanate to 4-imidazolone-5-propionate. In Vibrio vulnificus (strain CMCP6), this protein is Urocanate hydratase.